Reading from the N-terminus, the 360-residue chain is MLLILANWLEHYFDVFRVFHYLTLRGILGILTALVISFIVGPPMIRYLGSYKIGQTIRDDGPQSHLSKAGTPTMGGALILVTITVSTLLWSDLGNRYVWAVLLVTLAYGLIGFVDDYKKLVLKNSKGLAARYKYLWQSVFGLGAALFLYHTASSPQETQFIVPFFKQVVLNMGWLYVPLVYFVVVGSSNAVNLTDGLDGLAILPTVLVAGGLAIFAYASGHSEFSEYLGIPYLPKAGELVVFCGALVGAGLGFLWFNTYPAQVFMGDIGALALGAALGMVAVLVRQEIVLMIMGGIFVMETVSVMLQVLSFKLTGRRIFRMAPIHHHFELKGWPEPRVIVRFWIISVILVLIGLATLKLR.

Transmembrane regions (helical) follow at residues 21–41 (YLTL…FIVG), 70–90 (GTPT…TLLW), 97–117 (YVWA…VDDY), 134–154 (YLWQ…TASS), 168–188 (VVLN…VGSS), 199–219 (GLAI…AYAS), 236–256 (AGEL…FLWF), 263–283 (VFMG…VAVL), 288–308 (IVLM…MLQV), and 338–358 (VIVR…ATLK).

Belongs to the glycosyltransferase 4 family. MraY subfamily. It depends on Mg(2+) as a cofactor.

The protein resides in the cell inner membrane. The catalysed reaction is UDP-N-acetyl-alpha-D-muramoyl-L-alanyl-gamma-D-glutamyl-meso-2,6-diaminopimeloyl-D-alanyl-D-alanine + di-trans,octa-cis-undecaprenyl phosphate = di-trans,octa-cis-undecaprenyl diphospho-N-acetyl-alpha-D-muramoyl-L-alanyl-D-glutamyl-meso-2,6-diaminopimeloyl-D-alanyl-D-alanine + UMP. It participates in cell wall biogenesis; peptidoglycan biosynthesis. Functionally, catalyzes the initial step of the lipid cycle reactions in the biosynthesis of the cell wall peptidoglycan: transfers peptidoglycan precursor phospho-MurNAc-pentapeptide from UDP-MurNAc-pentapeptide onto the lipid carrier undecaprenyl phosphate, yielding undecaprenyl-pyrophosphoryl-MurNAc-pentapeptide, known as lipid I. This chain is Phospho-N-acetylmuramoyl-pentapeptide-transferase, found in Methylococcus capsulatus (strain ATCC 33009 / NCIMB 11132 / Bath).